An 873-amino-acid polypeptide reads, in one-letter code: Outer membrane usher protein FimC (873 aa).

The signal sequence occupies residues 1–15; that stretch reads MKQIPLILAMSLAFA. A disulfide bridge links Cys815 with Cys838.

It belongs to the fimbrial export usher family.

The protein resides in the cell outer membrane. Probable porin-like protein necessary for the assembly of a pilin-type protein. This is Outer membrane usher protein FimC (fimC) from Bordetella pertussis (strain Tohama I / ATCC BAA-589 / NCTC 13251).